Reading from the N-terminus, the 77-residue chain is U8-lycotoxin-Ls1d (77 aa).

The N-terminal stretch at 1–20 is a signal peptide; the sequence is MKLIIFTGLVLFAIVSLIEA. Residues 21 to 26 constitute a propeptide that is removed on maturation; it reads QAENEK.

Belongs to the neurotoxin 19 (CSTX) family. 08 (U8-Lctx) subfamily. In terms of processing, contains 4 disulfide bonds. Expressed by the venom gland.

It is found in the secreted. In Lycosa singoriensis (Wolf spider), this protein is U8-lycotoxin-Ls1d.